A 316-amino-acid chain; its full sequence is Probable inactive poly [ADP-ribose] polymerase SRO4 (316 aa).

The segment at 1–28 (MDYSKTEETPINEEQGSTNSSESRSNEE) is disordered. Residues 14–23 (EQGSTNSSES) are compositionally biased toward low complexity. The PARP catalytic domain occupies 28 to 255 (ELFSDCDQQH…KSPWISFPVL (228 aa)). Positions 243-314 (KNPKSPWISF…IKSVGQKVHK (72 aa)) constitute an RST domain.

The protein localises to the nucleus. Functionally, probable inactive ADP-ribosyltransferase that may be involved in stress and developmental responses. The polypeptide is Probable inactive poly [ADP-ribose] polymerase SRO4 (SRO4) (Arabidopsis thaliana (Mouse-ear cress)).